The following is a 1191-amino-acid chain: Roquin-2 (1191 aa).

Zn(2+) contacts are provided by Cys-14, Cys-17, Cys-33, His-35, Cys-38, Cys-50, and Asp-53. The segment at 14 to 54 (CPICYNEFDENVHKPISLGCSHTVCKTCLNKLHRKACPFDQ) adopts an RING-type; degenerate zinc-finger fold. Positions 91–170 (ENKHYEVAKK…RTVTELILQH (80 aa)) are HEPN-N. The tract at residues 171–325 (QNPQQLSANL…SIIDKLQSPE (155 aa)) is ROQ. The segment at 326–396 (SFAKSVQELT…GLVDFIQNYS (71 aa)) is HEPN-C. The C3H1-type zinc-finger motif lies at 410-438 (KYKTSMCRDLRQQGGCPRGTNCTFAHSQE). Disordered regions lie at residues 528 to 576 (GANG…NSVP) and 644 to 680 (ESSL…PQPY). Over residues 530-546 (NGQNAAGPSADSVTENK) the composition is skewed to polar residues. Ser-549 carries the post-translational modification Phosphoserine. Positions 554-576 (PVSNVAATSAGPSNVGTELNSVP) are enriched in polar residues. 3 positions are modified to phosphoserine: Ser-808, Ser-983, and Ser-1119.

Interacts with EDC4. Interacts with CCR4-NOT deadenylase complex. Interacts with MAP3K5; the interaction is probably stimulus-dependent. Proteolytically cleaved after Arg-509 and Arg-585 by MALT1 in activated CD4(+) T cells; cleavage at Arg-509 and Arg-585 is critical for promoting RC3H1 degradation in response to T-cell receptor (TCR) stimulation, and hence is necessary for prolonging the stability of a set of mRNAs controlling Th17 cell differentiation. In terms of tissue distribution, expressed in spleen, testis, ovary and small intestine.

It localises to the cytoplasm. The protein localises to the P-body. It carries out the reaction S-ubiquitinyl-[E2 ubiquitin-conjugating enzyme]-L-cysteine + [acceptor protein]-L-lysine = [E2 ubiquitin-conjugating enzyme]-L-cysteine + N(6)-ubiquitinyl-[acceptor protein]-L-lysine.. It functions in the pathway protein modification; protein ubiquitination. Binding to dsRNA, but not CDE RNA, crosstalks with the E3 ubiquitin ligase activity and may inhibit ubiquitination. Functionally, post-transcriptional repressor of mRNAs containing a conserved stem loop motif, called constitutive decay element (CDE), which is often located in the 3'-UTR, as in HMGXB3, ICOS, IER3, NFKBID, NFKBIZ, PPP1R10, TNF and in many more mRNAs. Binds to CDE and promotes mRNA deadenylation and degradation. This process does not involve miRNAs. In follicular helper T (Tfh) cells, represses of ICOS and TNFRSF4 expression, thus preventing spontaneous Tfh cell differentiation, germinal center B-cell differentiation in the absence of immunization and autoimmunity. In resting or LPS-stimulated macrophages, controls inflammation by suppressing TNF expression. Also recognizes CDE in its own mRNA and in that of paralogous RC3H1, possibly leading to feedback loop regulation. miRNA-binding protein that regulates microRNA homeostasis. Enhances DICER-mediated processing of pre-MIR146a but reduces mature MIR146a levels through an increase of 3' end uridylation. Both inhibits ICOS mRNA expression and they may act together to exert the suppression. Acts as a ubiquitin E3 ligase. Pairs with E2 enzymes UBE2B, UBE2D2, UBE2E2, UBE2E3, UBE2G2, UBE2K and UBE2Q2 and produces polyubiquitin chains. Shows the strongest activity when paired with UBE2N:UBE2V1 or UBE2N:UBE2V2 E2 complexes and generate both short and long polyubiquitin chains. Involved in the ubiquitination of MAP3K5. Able to interact with double-stranded RNA (dsRNA). The protein is Roquin-2 (RC3H2) of Homo sapiens (Human).